The chain runs to 478 residues: 9-divinyl ether synthase (478 aa).

Cysteine 431 serves as a coordination point for heme.

The protein belongs to the cytochrome P450 family. 9-divinyl ether synthase subfamily.

It carries out the reaction (9S)-hydroperoxy-(10E,12Z)-octadecadienoate = colneleate + H2O. Involved in the biosynthesis of the anti-fungal toxins colneleic acid and colnelenic acid. This is 9-divinyl ether synthase (DES) from Capsicum annuum (Capsicum pepper).